Reading from the N-terminus, the 502-residue chain is Probable glycine dehydrogenase (decarboxylating) subunit 2 (502 aa).

Residue K273 is modified to N6-(pyridoxal phosphate)lysine.

This sequence belongs to the GcvP family. C-terminal subunit subfamily. As to quaternary structure, the glycine cleavage system is composed of four proteins: P, T, L and H. In this organism, the P 'protein' is a heterodimer of two subunits. It depends on pyridoxal 5'-phosphate as a cofactor.

It catalyses the reaction N(6)-[(R)-lipoyl]-L-lysyl-[glycine-cleavage complex H protein] + glycine + H(+) = N(6)-[(R)-S(8)-aminomethyldihydrolipoyl]-L-lysyl-[glycine-cleavage complex H protein] + CO2. Its function is as follows. The glycine cleavage system catalyzes the degradation of glycine. The P protein binds the alpha-amino group of glycine through its pyridoxal phosphate cofactor; CO(2) is released and the remaining methylamine moiety is then transferred to the lipoamide cofactor of the H protein. In Thermococcus gammatolerans (strain DSM 15229 / JCM 11827 / EJ3), this protein is Probable glycine dehydrogenase (decarboxylating) subunit 2.